A 393-amino-acid chain; its full sequence is Bifunctional chrysanthemol synthase, chloroplastic (393 aa).

Low complexity predominate over residues 1–18; sequence MACSSSLSSKWASWGASS. The tract at residues 1–22 is disordered; that stretch reads MACSSSLSSKWASWGASSRPHP. Residues 1-53 constitute a chloroplast transit peptide; the sequence is MACSSSLSSKWASWGASSRPHPSVQPFVTRKNVVRYHKPTSELSYSPLTTTLS. Residues Lys99, Arg102, and Gln137 each coordinate dimethylallyl diphosphate. 2 residues coordinate Mg(2+): Asp144 and Asp148. Positions 153, 154, 241, 280, 287, 297, and 306 each coordinate dimethylallyl diphosphate.

This sequence belongs to the FPP/GGPP synthase family. Mg(2+) is required as a cofactor. As to expression, restricted to glandular trichomes during achene maturation. Expressed in flowers and in both ray and disk florets.

Its subcellular location is the plastid. It is found in the chloroplast. It carries out the reaction 2 dimethylallyl diphosphate = (R,R)-chrysanthemyl diphosphate + diphosphate. It catalyses the reaction (R,R)-chrysanthemyl diphosphate + H2O = (R,R)-chrysanthemol + diphosphate. The catalysed reaction is (R)-lavandulyl diphosphate + H2O = (R)-lavandulol + diphosphate. It participates in isoprenoid biosynthesis. In terms of biological role, component of the monoterpenoid pyrethrins biosynthesis; pyrethrins are widely used plant-derived pesticide. Catalyzes the condensation of two molecules of dimethylallyl diphosphate to produce chrysanthemyl diphosphate (CPP), a monoterpene with a non-head-to-tail or irregular c1'-2-3 linkage between isoprenoid units. In a second step, hydrolyzes the diphosphate moiety of CPP to form chrysanthemol. With a lower efficiency, can also converts dimethylallyl diphosphate into lavandulyl diphosphate (LPP), and subsequently LPP into lavandulol. In Tanacetum cinerariifolium (Dalmatian daisy), this protein is Bifunctional chrysanthemol synthase, chloroplastic.